We begin with the raw amino-acid sequence, 125 residues long: Allatostatin (125 aa).

Residues 1–26 form the signal peptide; that stretch reads MKTSAYNVYLGVVAAMLALLFVTINA. Residues 27–106 constitute a propeptide that is removed on maturation; the sequence is APMEADDETA…SRLARQWRAD (80 aa). Q109 bears the Pyrrolidone carboxylic acid mark.

Belongs to the allatostatin family.

The protein resides in the secreted. Functionally, strongly inhibits juvenile hormone biosynthesis in vitro by the corpora allata from fifth-stadium larvae and adult females. This is Allatostatin from Spodoptera frugiperda (Fall armyworm).